The chain runs to 1130 residues: MGVPALFRWLSKKYPKIVERVKEDTPKKIRGPDGEIVEEPIRYENPNPNGFEVDNLYLDMNGIVHPCTHPEGRPAPETEEEMMVEIFKYTERVVNMCRPRKVLMMAIDGVAPRAKMNQQRSRRFRAAQEAADKEEERREAIKLFEAMGHAVSEETANHKSWDTNAITPGTPFMDLLSISLKYWVSHKLTTDPGWKDLKIILSDSSVPGEGEHKIMDWIRRQRSYPTWDANTSHVIYGLDADLIMLSLATHEPHFRVLREDVFAQSSKGPHACKNCGKVGHIAANCKSDKKFKDPNVAEVAKTEDPKPFIFLDVACLREYLAVELVVPGMPFPFDLELAIDDWIFMIFFVGNDFLPHLPSLEIREGAIDVLLKIWRAELPRMGGYLTNHGKVNLDRAQVILEGLAKSEDEIFQKRKDDEERQEHSQKRRRIEEHKRQDEDKAREEDRNTLTLNGTEYVAVDNPAATARGGPLHPSLPSRPAFDLVPKEDAVKQPEDQDQKAKKAMAGSNSDIVKNRKAIRMANMSAAQALKAELEGGNDVNVDDKKAIAQEGKEEDEAVVTVERTEDEEKEQLTKEEARGTLEEQGEKEGVDEEVVPPAIQTDEDEGEAPVGDATVAENDESTIPEDDEDPTHVPRKRKRGDSDGDEDSNEEDDDDDDDDAPPNPEADQPIPKKKLKVNADGTVDYEDDVKLWEPGYRERYYEKKFGVKLSEREFIDKVTKSYMEGLCWVLEYYYQGVPAWDWFYPYHYAPFAQDFRDVGSMDIKFETSIPFKPFAQLLGVFPAASRIHLPEPLQTLMIDEDSPILDFYPPDFEIDMNGKKMAWQGVALLPFIDQNRLLTALKSKEELLSDDEKRRNSWGDNVMFIANENPLYDLFCDKLYGLRAKDVSKPIPIDTKASYGITGSVLPDPNCVPASTFDTPIPSISECPDLNPNDSISVRYYFPRQAHPHRSILLRGYKPEPARLTESDKDWVRRGGQGGRRGHRHNGGGNGNVTGGPGMARGRYESGPPRTNGYQPPPPRSNYGGSSGYGYGAPAPLPSRPPVSSYGGGAGGYGYSNPYAAAPNPYAGGYGAPAPYAAGGYGQRPYVPPLPPPNPYSAPPPAYGRPPGGGYGYGAPPPRGGGYNPYPSRR.

A coiled-coil region spans residues 121–147; it reads SRRFRAAQEAADKEEERREAIKLFEAM. The CCHC-type zinc-finger motif lies at 270-287; sequence HACKNCGKVGHIAANCKS. 3 stretches are compositionally biased toward basic and acidic residues: residues 411-447, 541-551, and 570-588; these read FQKRKDDEERQEHSQKRRRIEEHKRQDEDKAREEDRN, VDDKKAIAQEG, and EQLTKEEARGTLEEQGEKE. Disordered regions lie at residues 411-448, 533-678, 965-1036, and 1072-1130; these read FQKRKDDEERQEHSQKRRRIEEHKRQDEDKAREEDRNT, LEGG…LKVN, TESD…APAP, and APAP…PSRR. The stretch at 412–441 forms a coiled coil; it reads QKRKDDEERQEHSQKRRRIEEHKRQDEDKA. Acidic residues-rich tracts occupy residues 617–629 and 643–660; these read ENDESTIPEDDED and DGDEDSNEEDDDDDDDDA. Over residues 987 to 999 the composition is skewed to gly residues; sequence GGGNGNVTGGPGM. Residues 1086–1104 show a composition bias toward pro residues; it reads YVPPLPPPNPYSAPPPAYG.

The protein belongs to the 5'-3' exonuclease family. XRN2/RAT1 subfamily. In terms of assembly, interacts with RAI1; the interaction is direct, stabilizes RAT1 protein structure and may stimulate its exoribonuclease activity. The interaction also stimulates RAI1 pyrophosphohydrolase activity, probably by recruiting it to mRNA substrates.

It localises to the nucleus. Functionally, possesses 5'-&gt;3' exoribonuclease activity. Required for the processing of nuclear mRNA and rRNA precursors. May promote the termination of transcription by RNA polymerase II. Essential for vegetative cell growth and chromosome segregation. The protein is 5'-3' exoribonuclease 2 (RAT1) of Cryptococcus neoformans var. neoformans serotype D (strain B-3501A) (Filobasidiella neoformans).